The following is a 95-amino-acid chain: Large ribosomal subunit protein bL27 (95 aa).

A propeptide spanning residues 1-9 (MLNMNLQFF) is cleaved from the precursor.

Belongs to the bacterial ribosomal protein bL27 family. In terms of processing, the N-terminus is cleaved by ribosomal processing cysteine protease Prp.

In Agathobacter rectalis (strain ATCC 33656 / DSM 3377 / JCM 17463 / KCTC 5835 / VPI 0990) (Eubacterium rectale), this protein is Large ribosomal subunit protein bL27.